The following is a 178-amino-acid chain: Fatty-acid and retinol-binding protein 1 (178 aa).

A signal peptide spans 1-16; it reads MYHQLILLALIGTIMA. 2 coiled-coil regions span residues 67–89 and 129–154; these read DAAL…ELRN and IKQA…LKVT.

Belongs to the fatty-acid and retinol-binding protein (FARBP) family. Not glycosylated.

It is found in the secreted. Its function is as follows. Binds retinol and different fatty acids. This is Fatty-acid and retinol-binding protein 1 from Loa loa (Eye worm).